The primary structure comprises 208 residues: Pectinesterase inhibitor 6 (208 aa).

An N-terminal signal peptide occupies residues 1–30 (MTSSSSSPITFTLLLLLSLLVALNPNPSLA). Cys53 and Cys62 are disulfide-bonded. Residues Asn54 and Asn75 are each glycosylated (N-linked (GlcNAc...) asparagine). Cys118 and Cys165 form a disulfide bridge.

The protein belongs to the PMEI family.

It localises to the secreted. It is found in the extracellular space. Its subcellular location is the apoplast. In terms of biological role, pectin methylesterase (PME) inhibitor that targets PME from seeds and modulates PME activity and pectin methylesterification during seed germination. Promotes mucilage release by limiting methylesterification of homogalacturonan in seed coat epidermal cells. This is Pectinesterase inhibitor 6 from Arabidopsis thaliana (Mouse-ear cress).